The chain runs to 404 residues: Glucose-1-phosphate adenylyltransferase (404 aa).

Alpha-D-glucose 1-phosphate contacts are provided by residues Tyr99, Gly164, 179 to 180, and Ser197; that span reads EK.

Belongs to the bacterial/plant glucose-1-phosphate adenylyltransferase family.

It carries out the reaction alpha-D-glucose 1-phosphate + ATP + H(+) = ADP-alpha-D-glucose + diphosphate. It functions in the pathway glycan biosynthesis; glycogen biosynthesis. In terms of biological role, involved in the biosynthesis of ADP-glucose building block, required in the biosynthesis of maltose-1-phosphate (M1P) and in the elongation reactions to produce linear alpha-1,4-glucans. Catalyzes the reaction between ATP and alpha-D-glucose 1-phosphate (G1P) to produce pyrophosphate and ADP-Glc. The chain is Glucose-1-phosphate adenylyltransferase from Mycolicibacterium smegmatis (strain ATCC 700084 / mc(2)155) (Mycobacterium smegmatis).